The primary structure comprises 432 residues: D-amino acid dehydrogenase (432 aa).

3–17 (VLVLGSGVIGTTTAY) lines the FAD pocket.

This sequence belongs to the DadA oxidoreductase family. It depends on FAD as a cofactor.

The enzyme catalyses a D-alpha-amino acid + A + H2O = a 2-oxocarboxylate + AH2 + NH4(+). Its pathway is amino-acid degradation; D-alanine degradation; NH(3) and pyruvate from D-alanine: step 1/1. Its function is as follows. Oxidative deamination of D-amino acids. This is D-amino acid dehydrogenase from Azotobacter vinelandii (strain DJ / ATCC BAA-1303).